The chain runs to 548 residues: Glutamate--tRNA ligase (548 aa).

The 'HIGH' region signature appears at 102–112 (PSPSGPLHIGH).

Belongs to the class-I aminoacyl-tRNA synthetase family. Glutamate--tRNA ligase type 2 subfamily.

The protein resides in the cytoplasm. It catalyses the reaction tRNA(Glu) + L-glutamate + ATP = L-glutamyl-tRNA(Glu) + AMP + diphosphate. Functionally, catalyzes the attachment of glutamate to tRNA(Glu) in a two-step reaction: glutamate is first activated by ATP to form Glu-AMP and then transferred to the acceptor end of tRNA(Glu). This is Glutamate--tRNA ligase from Thermoplasma volcanium (strain ATCC 51530 / DSM 4299 / JCM 9571 / NBRC 15438 / GSS1).